Reading from the N-terminus, the 342-residue chain is Glucan endo-1,3-beta-glucosidase (342 aa).

Positions 1–26 (MLASSPMLLFLLSLLMAYNFDTTAGQ) are cleaved as a signal peptide. Glu119 acts as the Proton donor in catalysis. The Nucleophile role is filled by Glu261.

Belongs to the glycosyl hydrolase 17 family. The N-terminus is blocked.

The protein localises to the vacuole. The catalysed reaction is Hydrolysis of (1-&gt;3)-beta-D-glucosidic linkages in (1-&gt;3)-beta-D-glucans.. Functionally, is thought to be an important plant defense-related product against fungal pathogens. Accumulation of the glucanase can be detected as early as 4 hours after inoculation. In Brassica campestris (Field mustard), this protein is Glucan endo-1,3-beta-glucosidase (BGL).